A 272-amino-acid chain; its full sequence is Golgi to ER traffic protein 5 (272 aa).

Disordered stretches follow at residues Met1–Thr35 and Leu85–Ser105. The Ubiquitin-like domain occupies Ile108–Gly198. Positions Ser212–Glu231 are disordered.

Belongs to the GET5 family. In terms of assembly, forms homodimers via its C-terminal domain. Component of the get4/get5/sgt2 sorting complex. Binds directly sgt12 homodimers.

It is found in the cytoplasm. In terms of biological role, component of the get4/get5/sgt2 sorting complex involved in the GET (guided entry of TA proteins) pathway that leads to the insertion of tail-anchored (TA) proteins into the endoplasmic reticulum. Get4 and get5 form an obligate complex that catalyzes the transfer of tail-anchored proteins destined to the endoplasmic reticulum from sgt2 to the cytosolic targeting factor which then targets the TA protein to the ER membrane via get1/get2. This chain is Golgi to ER traffic protein 5, found in Aspergillus fumigatus (strain ATCC MYA-4609 / CBS 101355 / FGSC A1100 / Af293) (Neosartorya fumigata).